A 279-amino-acid chain; its full sequence is Putative pyruvate, phosphate dikinase regulatory protein (279 aa).

An ADP-binding site is contributed by 153–160 (GVSRTSKT).

The protein belongs to the pyruvate, phosphate/water dikinase regulatory protein family. PDRP subfamily.

It catalyses the reaction N(tele)-phospho-L-histidyl/L-threonyl-[pyruvate, phosphate dikinase] + ADP = N(tele)-phospho-L-histidyl/O-phospho-L-threonyl-[pyruvate, phosphate dikinase] + AMP + H(+). The catalysed reaction is N(tele)-phospho-L-histidyl/O-phospho-L-threonyl-[pyruvate, phosphate dikinase] + phosphate + H(+) = N(tele)-phospho-L-histidyl/L-threonyl-[pyruvate, phosphate dikinase] + diphosphate. In terms of biological role, bifunctional serine/threonine kinase and phosphorylase involved in the regulation of the pyruvate, phosphate dikinase (PPDK) by catalyzing its phosphorylation/dephosphorylation. The polypeptide is Putative pyruvate, phosphate dikinase regulatory protein (Bradyrhizobium sp. (strain ORS 278)).